We begin with the raw amino-acid sequence, 70 residues long: Small ribosomal subunit protein bS21 (70 aa).

This sequence belongs to the bacterial ribosomal protein bS21 family.

This is Small ribosomal subunit protein bS21 from Delftia acidovorans (strain DSM 14801 / SPH-1).